The sequence spans 156 residues: Ribosomal RNA large subunit methyltransferase H (156 aa).

Residues Leu-73, Gly-104, and 123–128 (LSALTL) each bind S-adenosyl-L-methionine.

Belongs to the RNA methyltransferase RlmH family. Homodimer.

Its subcellular location is the cytoplasm. The catalysed reaction is pseudouridine(1915) in 23S rRNA + S-adenosyl-L-methionine = N(3)-methylpseudouridine(1915) in 23S rRNA + S-adenosyl-L-homocysteine + H(+). Specifically methylates the pseudouridine at position 1915 (m3Psi1915) in 23S rRNA. This is Ribosomal RNA large subunit methyltransferase H from Vibrio vulnificus (strain CMCP6).